The sequence spans 410 residues: Serine hydroxymethyltransferase (410 aa).

(6S)-5,6,7,8-tetrahydrofolate-binding positions include L119 and 123 to 125; that span reads GHL. N6-(pyridoxal phosphate)lysine is present on K228. A (6S)-5,6,7,8-tetrahydrofolate-binding site is contributed by 351 to 353; the sequence is SPF.

The protein belongs to the SHMT family. In terms of assembly, homodimer. Pyridoxal 5'-phosphate is required as a cofactor.

The protein resides in the cytoplasm. The catalysed reaction is (6R)-5,10-methylene-5,6,7,8-tetrahydrofolate + glycine + H2O = (6S)-5,6,7,8-tetrahydrofolate + L-serine. It participates in one-carbon metabolism; tetrahydrofolate interconversion. Its pathway is amino-acid biosynthesis; glycine biosynthesis; glycine from L-serine: step 1/1. Functionally, catalyzes the reversible interconversion of serine and glycine with tetrahydrofolate (THF) serving as the one-carbon carrier. This reaction serves as the major source of one-carbon groups required for the biosynthesis of purines, thymidylate, methionine, and other important biomolecules. Also exhibits THF-independent aldolase activity toward beta-hydroxyamino acids, producing glycine and aldehydes, via a retro-aldol mechanism. This chain is Serine hydroxymethyltransferase, found in Alkaliphilus oremlandii (strain OhILAs) (Clostridium oremlandii (strain OhILAs)).